The sequence spans 104 residues: Large ribosomal subunit protein uL24 (104 aa).

It belongs to the universal ribosomal protein uL24 family. In terms of assembly, part of the 50S ribosomal subunit.

Functionally, one of two assembly initiator proteins, it binds directly to the 5'-end of the 23S rRNA, where it nucleates assembly of the 50S subunit. One of the proteins that surrounds the polypeptide exit tunnel on the outside of the subunit. The protein is Large ribosomal subunit protein uL24 of Proteus mirabilis (strain HI4320).